The sequence spans 321 residues: Torsin-2A (321 aa).

The signal sequence occupies residues 1 to 26 (MAVARHGYRPWGSILGLLGLALAAAA). ATP is bound at residue 93 to 100 (GWTGTGKS). A glycan (N-linked (GlcNAc...) asparagine) is linked at N149.

This sequence belongs to the ClpA/ClpB family. Torsin subfamily. In terms of assembly, homohexamer. Interacts with TOR1AIP1. N-glycosylated. In terms of tissue distribution, expressed at similar levels in liver, muscle and brain (at protein level).

The protein localises to the endoplasmic reticulum lumen. In Mus musculus (Mouse), this protein is Torsin-2A (Tor2a).